A 498-amino-acid polypeptide reads, in one-letter code: Glycerol kinase (498 aa).

Thr11 is an ADP binding site. The ATP site is built by Thr11, Ser12, and Ser13. Thr11 provides a ligand contact to sn-glycerol 3-phosphate. Arg15 is an ADP binding site. Sn-glycerol 3-phosphate-binding residues include Arg81, Glu82, Tyr133, and Asp242. Residues Arg81, Glu82, Tyr133, Asp242, and Gln243 each contribute to the glycerol site. ADP is bound by residues Thr264 and Gly307. Residues Thr264, Gly307, Gln311, and Gly408 each coordinate ATP. ADP is bound by residues Gly408 and Asn412.

The protein belongs to the FGGY kinase family.

It carries out the reaction glycerol + ATP = sn-glycerol 3-phosphate + ADP + H(+). Its pathway is polyol metabolism; glycerol degradation via glycerol kinase pathway; sn-glycerol 3-phosphate from glycerol: step 1/1. Inhibited by fructose 1,6-bisphosphate (FBP). In terms of biological role, key enzyme in the regulation of glycerol uptake and metabolism. Catalyzes the phosphorylation of glycerol to yield sn-glycerol 3-phosphate. This chain is Glycerol kinase, found in Ralstonia nicotianae (strain ATCC BAA-1114 / GMI1000) (Ralstonia solanacearum).